The following is a 249-amino-acid chain: Large ribosomal subunit protein uL22m (249 aa).

A mitochondrion-targeting transit peptide spans 1–22; that stretch reads MKYINQFMKISKGFLVPSSTIG. The tract at residues 70–98 is disordered; that stretch reads ANQKDDSNRQQKEERVKERPRSRISFKKQ. Basic and acidic residues predominate over residues 72-98; that stretch reads QKDDSNRQQKEERVKERPRSRISFKKQ.

It belongs to the universal ribosomal protein uL22 family. Component of the mitochondrial large ribosomal subunit (mt-LSU). Mature yeast 74S mitochondrial ribosomes consist of a small (37S) and a large (54S) subunit. The 37S small subunit contains a 15S ribosomal RNA (15S mt-rRNA) and at least 32 different proteins. The 54S large subunit contains a 21S rRNA (21S mt-rRNA) and at least 45 different proteins. uL22m forms the wall of the exit tunnel.

Its subcellular location is the mitochondrion. Its function is as follows. Component of the mitochondrial ribosome (mitoribosome), a dedicated translation machinery responsible for the synthesis of mitochondrial genome-encoded proteins, including at least some of the essential transmembrane subunits of the mitochondrial respiratory chain. The mitoribosomes are attached to the mitochondrial inner membrane and translation products are cotranslationally integrated into the membrane. This chain is Large ribosomal subunit protein uL22m (mrpl22), found in Schizosaccharomyces pombe (strain 972 / ATCC 24843) (Fission yeast).